The sequence spans 489 residues: Ataxin-10 homolog (489 aa).

This sequence belongs to the ataxin-10 family.

It is found in the cytoplasm. May play a role in the regulation of cytokinesis. This chain is Ataxin-10 homolog (CTR86), found in Debaryomyces hansenii (strain ATCC 36239 / CBS 767 / BCRC 21394 / JCM 1990 / NBRC 0083 / IGC 2968) (Yeast).